A 359-amino-acid chain; its full sequence is Phosphoribosylformylglycinamidine cyclo-ligase (359 aa).

It belongs to the AIR synthase family.

The protein resides in the cytoplasm. The catalysed reaction is 2-formamido-N(1)-(5-O-phospho-beta-D-ribosyl)acetamidine + ATP = 5-amino-1-(5-phospho-beta-D-ribosyl)imidazole + ADP + phosphate + H(+). Its pathway is purine metabolism; IMP biosynthesis via de novo pathway; 5-amino-1-(5-phospho-D-ribosyl)imidazole from N(2)-formyl-N(1)-(5-phospho-D-ribosyl)glycinamide: step 2/2. This Brucella melitensis biotype 2 (strain ATCC 23457) protein is Phosphoribosylformylglycinamidine cyclo-ligase.